The chain runs to 265 residues: Hydroxyethylthiazole kinase (265 aa).

Substrate is bound at residue Met50. The ATP site is built by Arg125 and Thr171. Gly198 is a substrate binding site.

The protein belongs to the Thz kinase family. Requires Mg(2+) as cofactor.

It carries out the reaction 5-(2-hydroxyethyl)-4-methylthiazole + ATP = 4-methyl-5-(2-phosphooxyethyl)-thiazole + ADP + H(+). It functions in the pathway cofactor biosynthesis; thiamine diphosphate biosynthesis; 4-methyl-5-(2-phosphoethyl)-thiazole from 5-(2-hydroxyethyl)-4-methylthiazole: step 1/1. Its function is as follows. Catalyzes the phosphorylation of the hydroxyl group of 4-methyl-5-beta-hydroxyethylthiazole (THZ). This is Hydroxyethylthiazole kinase from Salmonella paratyphi C (strain RKS4594).